A 99-amino-acid polypeptide reads, in one-letter code: Large ribosomal subunit protein uL23 (99 aa).

Belongs to the universal ribosomal protein uL23 family. In terms of assembly, part of the 50S ribosomal subunit. Contacts protein L29, and trigger factor when it is bound to the ribosome.

Its function is as follows. One of the early assembly proteins it binds 23S rRNA. One of the proteins that surrounds the polypeptide exit tunnel on the outside of the ribosome. Forms the main docking site for trigger factor binding to the ribosome. This is Large ribosomal subunit protein uL23 from Saccharopolyspora erythraea (strain ATCC 11635 / DSM 40517 / JCM 4748 / NBRC 13426 / NCIMB 8594 / NRRL 2338).